The following is a 928-amino-acid chain: MAELLACLQSISAHAKDMMALARSRGATGSRPTPTTLPHFDELLPPNLDFVRTRLQEARLPPKAIKGTLSAYESACARWKHDLEEAFDRTAHSISPHNFQRLAQLRTRLYVEQVQKWLYEVLQVPERWKAEMEKQRAHINATMGPDKTTGPGKRSRPKFHSEYTPVLELYFHFNAYPTYADRRILAEKTGMLTRQITVWFQNHRRRAKGPLPRMSPTAKIPMEEFERQLENLARKIVPVLLPPTLRRFAPGNENKSLAAASRQSAGKSSKNAKRLSELEKAQQVPRKPSENAEAGPSSLGAMLARVMHNDSVSKKKSKKAKKEKASQQNVVCDVEMRDATATKEKRRKMKKLPRAAGQPFDVPMDVERADKASRKAMKKAKKSPRAFDSRAELAFAQAAYPSPSQYAYVHSRKPSAQKPSSDSPRKDFGQLGKGRPSSNSTSSTVPPHRVSSRLNAMRPPYAFPAPYNAAAVPLTFSVASSTQFAFATDNRSFGFAERTPRKATVPAACTLIDYLISKFAGLRLLCVEQSVSSRSISLSTSESGKLAGLRTEGLTTGEASGVQTHVDSYAARRAITYVPPSAPLDCVVHNLARALQLKQVRPMVLAQPVVQPDAFAPFIARAERRARRKERKQRKALEEKQAKKDRKERQKASRSQRDSPSMDADVQSRASSVASTSSLPARKSSKKSRKSKGESAASSRATSVASSVRTPSLSSTSSRRSSGMSMPGTPRPEQDLPIMATADFNFAGDEDVTMTPDLAAQLFGEDEDGAAALGQMQYEEFSPDMLTFTSTAGGALSDMTADVNMPDLGNAYTSQQSVDDMNWTGFGLDAQNSASPGLFGDESNTGLDWLLSHNLLGDTQMSDLSYTAPTSTPSQINILGSTYACELGGSDSLGTPFNMNDWTFGLGACDDGFAGFGNNLLGGTAVAV.

Residues Gly152 to Leu211 constitute a DNA-binding region (homeobox). 5 disordered regions span residues Lys255–Pro296, Asp310–Asn329, Thr340–Pro359, Tyr406–Ser451, and Ala626–Leu736. A compositionally biased stretch (basic residues) spans Glu344 to Pro353. Over residues Lys635–Arg657 the composition is skewed to basic and acidic residues. Composition is skewed to low complexity over residues Ser668–Arg682 and Glu694–Gly728.

Its subcellular location is the nucleus. In terms of biological role, specifies A-alpha-4 mating-type. May regulate the expression of genes specific to the homokaryotic cell type. The chain is Mating-type protein A-alpha Y4 from Schizophyllum commune (Split gill fungus).